An 867-amino-acid polypeptide reads, in one-letter code: Protein translocase subunit SecA (867 aa).

ATP contacts are provided by residues Q85, 103–107, and D491; that span reads GEGKT.

It belongs to the SecA family. Monomer and homodimer. Part of the essential Sec protein translocation apparatus which comprises SecA, SecYEG and auxiliary proteins SecDF. Other proteins may also be involved.

It localises to the cell membrane. The protein resides in the cytoplasm. The catalysed reaction is ATP + H2O + cellular proteinSide 1 = ADP + phosphate + cellular proteinSide 2.. Part of the Sec protein translocase complex. Interacts with the SecYEG preprotein conducting channel. Has a central role in coupling the hydrolysis of ATP to the transfer of proteins into and across the cell membrane, serving as an ATP-driven molecular motor driving the stepwise translocation of polypeptide chains across the membrane. This Mycoplasmopsis pulmonis (strain UAB CTIP) (Mycoplasma pulmonis) protein is Protein translocase subunit SecA.